A 266-amino-acid chain; its full sequence is Putative carbamate hydrolase RutD (266 aa).

This sequence belongs to the AB hydrolase superfamily. Hydrolase RutD family.

It catalyses the reaction carbamate + 2 H(+) = NH4(+) + CO2. Its function is as follows. Involved in pyrimidine catabolism. May facilitate the hydrolysis of carbamate, a reaction that can also occur spontaneously. This chain is Putative carbamate hydrolase RutD, found in Escherichia coli O103:H2 (strain 12009 / EHEC).